An 896-amino-acid chain; its full sequence is Vacuolar zinc transporter TgZnT (896 aa).

At 1 to 472 (MPFSCFVFSQ…ETGTQRARRK (472 aa)) the chain is on the cytoplasmic side. Residues 82–91 (VLSSRGDESV) are compositionally biased toward basic and acidic residues. 3 disordered regions span residues 82–104 (VLSS…SPGF), 205–227 (MKEI…RPCA), and 255–329 (SSSC…SSAS). 2 stretches are compositionally biased toward low complexity: residues 210–225 (SPRS…SSRP) and 255–266 (SSSCCSRSNSSS). The segment covering 303-322 (VHERRAEATCCAPRDRHGGD) has biased composition (basic and acidic residues). A helical transmembrane segment spans residues 473 to 493 (LVMASMVCCVFMFVEIVAGVL). Residues 494–502 (ANSLALMTD) lie on the Vacuolar side of the membrane. The chain crosses the membrane as a helical span at residues 503-523 (ASHLLSDLCAFLISLFALWVS). Residues 524 to 539 (ELKGNPSMSFGYHRAE) are Cytoplasmic-facing. The helical transmembrane segment at 540-560 (ILGALLSVFLIWVLTAVLIYA) threads the bilayer. At 561–573 (ACFRLVDPPQVDG) the chain is on the vacuolar side. Residues 574–594 (ELMFWTALLGTLANLFMTHIL) traverse the membrane as a helical segment. Residues 595 to 737 (KVHSHGIGQV…YENMNLRAAY (143 aa)) are Cytoplasmic-facing. The tract at residues 621–707 (LQASSSSPEK…RPFSASSAGS (87 aa)) is disordered. Residues 656–680 (RDAEAGRDAEAGRDAEAGRDAETGR) show a composition bias toward basic and acidic residues. The chain crosses the membrane as a helical span at residues 738-758 (IHALGDLLQNIGVMIASALIW). Residues 759 to 762 (WRPD) are Vacuolar-facing. Residues 763–783 (WAIADPICTFIFSIFVLFTTL) traverse the membrane as a helical segment. Topologically, residues 784 to 896 (SILKEALNVL…CSDPMKVFRR (113 aa)) are cytoplasmic.

This sequence belongs to the cation diffusion facilitator (CDF) transporter (TC 2.A.4) family. SLC30A subfamily.

The protein resides in the vacuole membrane. It is found in the cytoplasmic vesicle membrane. Vacuolar zinc transporter that is probably involved in the transfer of zinc ions from the cytosol to the vacuole for intracellular storage. Plays an essential role in extracellular zinc tolerance. The protein is Vacuolar zinc transporter TgZnT of Toxoplasma gondii (strain ATCC 50853 / GT1).